The sequence spans 105 residues: Co-chaperonin GroES (105 aa).

It belongs to the GroES chaperonin family. As to quaternary structure, heptamer of 7 subunits arranged in a ring. Interacts with the chaperonin GroEL.

It is found in the cytoplasm. In terms of biological role, together with the chaperonin GroEL, plays an essential role in assisting protein folding. The GroEL-GroES system forms a nano-cage that allows encapsulation of the non-native substrate proteins and provides a physical environment optimized to promote and accelerate protein folding. GroES binds to the apical surface of the GroEL ring, thereby capping the opening of the GroEL channel. This chain is Co-chaperonin GroES, found in Methylovorus sp. (strain SS1 / DSM 11726).